Here is a 223-residue protein sequence, read N- to C-terminus: Large ribosomal subunit protein uL4 (223 aa).

A disordered region spans residues G47–R72.

The protein belongs to the universal ribosomal protein uL4 family. As to quaternary structure, part of the 50S ribosomal subunit.

In terms of biological role, one of the primary rRNA binding proteins, this protein initially binds near the 5'-end of the 23S rRNA. It is important during the early stages of 50S assembly. It makes multiple contacts with different domains of the 23S rRNA in the assembled 50S subunit and ribosome. Forms part of the polypeptide exit tunnel. This is Large ribosomal subunit protein uL4 from Fervidobacterium nodosum (strain ATCC 35602 / DSM 5306 / Rt17-B1).